A 138-amino-acid polypeptide reads, in one-letter code: Ribulose bisphosphate carboxylase small subunit (138 aa).

It belongs to the RuBisCO small chain family. As to quaternary structure, heterohexadecamer of 8 large and 8 small subunits.

The protein localises to the plastid. The protein resides in the chloroplast. Functionally, ruBisCO catalyzes two reactions: the carboxylation of D-ribulose 1,5-bisphosphate, the primary event in carbon dioxide fixation, as well as the oxidative fragmentation of the pentose substrate in the photorespiration process. Both reactions occur simultaneously and in competition at the same active site. Although the small subunit is not catalytic it is essential for maximal activity. The sequence is that of Ribulose bisphosphate carboxylase small subunit from Pyropia katadae (Red alga).